The primary structure comprises 91 residues: Putative 26S proteasome complex subunit sem-1 (91 aa).

The tract at residues 1 to 73 is disordered; sequence MASTQPKNDA…SWDDDDTSDD (73 aa). The span at 8-28 shows a compositional bias: basic and acidic residues; it reads NDAKSTEPKPEQPVTEKKTAV. Composition is skewed to acidic residues over residues 29–48 and 63–72; these read LEEDDEFEDFPVDDWEAEDT and ESWDDDDTSD.

Belongs to the DSS1/SEM1 family. Part of the 26S proteasome.

Subunit of the 26S proteasome which plays a role in ubiquitin-dependent proteolysis. This is Putative 26S proteasome complex subunit sem-1 (sem-1) from Neurospora crassa (strain ATCC 24698 / 74-OR23-1A / CBS 708.71 / DSM 1257 / FGSC 987).